Here is a 317-residue protein sequence, read N- to C-terminus: Peroxidase 22.3 (317 aa).

The first 25 residues, 1 to 25 (MASATNSSLSLMLLVAAAMASVASA), serve as a signal peptide directing secretion. Glutamine 26 is modified (pyrrolidone carboxylic acid). 2 cysteine pairs are disulfide-bonded: cysteine 36/cysteine 111 and cysteine 69/cysteine 74. Histidine 67 functions as the Proton acceptor in the catalytic mechanism. Residues aspartate 68, valine 71, glycine 73, aspartate 75, and serine 77 each coordinate Ca(2+). Asparagine 112 carries N-linked (GlcNAc...) asparagine glycosylation. 2 disulfides stabilise this stretch: cysteine 117-cysteine 312 and cysteine 196-cysteine 221. Proline 159 serves as a coordination point for substrate. Asparagine 171 carries an N-linked (GlcNAc...) asparagine glycan. Position 189 (histidine 189) interacts with heme b. Residue threonine 190 coordinates Ca(2+). Asparagine 205 is a glycosylation site (N-linked (GlcNAc...) asparagine). Ca(2+) contacts are provided by aspartate 236, threonine 239, and aspartate 244.

It belongs to the peroxidase family. Classical plant (class III) peroxidase subfamily. The cofactor is heme b. Ca(2+) is required as a cofactor.

It localises to the secreted. The enzyme catalyses H2O2 + AH2 = A + 2 H2O. Functionally, removal of H(2)O(2), oxidation of toxic reductants, biosynthesis and degradation of lignin, suberization, auxin catabolism, response to environmental stresses such as wounding, pathogen attack and oxidative stress. These functions might be dependent on each isozyme/isoform in each plant tissue. The protein is Peroxidase 22.3 of Oryza sativa subsp. japonica (Rice).